Here is a 476-residue protein sequence, read N- to C-terminus: Glutamate--tRNA ligase (476 aa).

Positions 9–19 match the 'HIGH' region motif; sequence PSPTGTLHLGT. Residues 248-252 carry the 'KMSKS' region motif; it reads KLSKR. ATP is bound at residue K251.

It belongs to the class-I aminoacyl-tRNA synthetase family. Glutamate--tRNA ligase type 1 subfamily. In terms of assembly, monomer.

It localises to the cytoplasm. The catalysed reaction is tRNA(Glu) + L-glutamate + ATP = L-glutamyl-tRNA(Glu) + AMP + diphosphate. Functionally, catalyzes the attachment of glutamate to tRNA(Glu) in a two-step reaction: glutamate is first activated by ATP to form Glu-AMP and then transferred to the acceptor end of tRNA(Glu). The chain is Glutamate--tRNA ligase from Prochlorococcus marinus (strain NATL2A).